We begin with the raw amino-acid sequence, 1058 residues long: MWHYTSINNDTRVALDPKPNQIRTITKPNTVPQLGTDYLYTFNPQRRSHTLRLLGPFQYFNFSETDRGHPLFRLPLKYPSKTIPTDELVDNLHSWMRSVHLLHTRSDDNSLRYNWMLGVYARSTNYTTPVGQLVVKTPAILNYANPQDAFNSVFIALGIDYIDIPITNSNIFDDGSTPYNVRIWHAPTMTEVNHILTLMRKSTLVSTHSSWHWNVLHTFHYRSESDMIDHFSAKILEDWRQKEKFDKGALVEADRVIQRLIPLSSSTYVQRLAAIGALYPNEFTENVLDLSRLSTALLQLSDTYYQHANDQLKRLYRRMYNDSRTLYMTARHQELLLAQVAANPNILLYPYTHIFTTAHITASYISNTGQGRIKHSLAVTGTTEHSTVPDIILGPTSEDVITISMVEPMSIAAEDMYGYVIDTPTRDIWPADEQVEQKGDAVALYDTKTSRALGMFNNTVRIDDLLSPLLGRVYRTYAKGDTMAMTQGSLDHQTLCAAVDSDITFVGNRMIAPLAEGYVPRAMHRNNSTMKMLSLYVAIKKLENFAANSYLMSPDTSIILLGAEREPAVNILRRFNSSVSNVRIIGMGDRAVEPNIRVRVPFPIDKNISADFVICDINSYEDQSFESMFGETMSVVTTCASAATRSLVKINHPSEYMINSVIERLSKLGGVFYHTALLKTASQNTYSYETYIYITPIAAAVGFLFYNNSAIINRYMTAVADDEAPVIPSIHTIIKEHSNTYSPGLFCGCIDVQSAPLALSQLKSYCSEATTWRVDSDDNLVNIIARIDPARIALEFRTRSNTSAHHEYQRCVPNGLGFKIRKTREFRYMHREVTFIHKLMMYALIREQISLTESMTQVVSIGGRNLADISVVPLTMKYIVIDPAARIETLTQEKKNIEIQARAFQFDASTMDLENNSIYLFIAVIMNEPNGAATPAQTQIDKIRNVATAMLTRTNCVAYISFYESGIITRLSQSTAHKTIRVEDGRLKVANYVPVDTLPEADVTLMLRDIGITYEIIRPSTPELVNACSSYGIRLGSTGGAVLDVFNHYSPVIKLVRS.

It belongs to the orthoreovirus lambda-2 protein family.

The protein resides in the virion. It catalyses the reaction a 5'-end diphospho-ribonucleoside in mRNA + GTP + H(+) = a 5'-end (5'-triphosphoguanosine)-ribonucleoside in mRNA + diphosphate. It carries out the reaction a 5'-end (5'-triphosphoguanosine)-ribonucleoside in mRNA + S-adenosyl-L-methionine = a 5'-end (N(7)-methyl 5'-triphosphoguanosine)-ribonucleoside in mRNA + S-adenosyl-L-homocysteine. Its function is as follows. Outer capsid protein involved in mRNA capping. Catalyzes the last 3 enzymatic activities for formation of the 5' cap structure on the viral plus-strand transcripts, namely the RNA guanylyltransferase, RNA-7N- and RNA-2'O-methyltransferase activities. The protein is Outer capsid protein VP4 (S4) of Lymantria dispar cypovirus 1 (isolate Rao) (LdCPV-1).